Reading from the N-terminus, the 381-residue chain is MAINIRKTHPLLKIINHTLIDLPAPSNISLWWNFGSLLGLCLIIQILTGLFLAMHYTADISMAFSSVVHICRDVNYGWLIRNIHANGASLFFICIYLHIARGLYYGSYLYKETWNIGVILLFLLMATAFVGYVLPWGQMSFWGATVITNLLSAFPYVGNTLVQWIWGGFSVDNATLTRFFAFHFLLPFLILALTIIHLLFLHETGSNNPLGINSDMDKISFHPYMSYKDILGFFAMIFFLAVLTLFIPNLLGDAENFIPANPLVTPPHIKPEWYLLFAYAIFRSIPNKLGGVLALLFSILILMLVPLLQTSKQRSTIFRPMTQILFWFLVANSIILTWIGGQPVEQPFIMVGQIASISYFSMFLIIIPFASWCENKILSLN.

4 consecutive transmembrane segments (helical) span residues 34-54 (FGSL…FLAM), 78-99 (WLIR…YLHI), 114-134 (WNIG…GYVL), and 179-199 (FFAF…IHLL). 2 residues coordinate heme b: H84 and H98. Heme b is bound by residues H183 and H197. H202 contributes to the a ubiquinone binding site. 4 helical membrane-spanning segments follow: residues 227-247 (YKDI…TLFI), 289-309 (LGGV…PLLQ), 321-341 (MTQI…WIGG), and 348-368 (FIMV…IIIP).

The protein belongs to the cytochrome b family. The cytochrome bc1 complex contains 3 respiratory subunits (MT-CYB, CYC1 and UQCRFS1), 2 core proteins (UQCRC1 and UQCRC2) and probably 6 low-molecular weight proteins. Heme b serves as cofactor.

It is found in the mitochondrion inner membrane. Its function is as follows. Component of the ubiquinol-cytochrome c reductase complex (complex III or cytochrome b-c1 complex) that is part of the mitochondrial respiratory chain. The b-c1 complex mediates electron transfer from ubiquinol to cytochrome c. Contributes to the generation of a proton gradient across the mitochondrial membrane that is then used for ATP synthesis. In Galeocerdo cuvier (Tiger shark), this protein is Cytochrome b (mt-cyb).